The primary structure comprises 373 residues: Cobalt-precorrin-5B C(1)-methyltransferase (373 aa).

It belongs to the CbiD family.

It catalyses the reaction Co-precorrin-5B + S-adenosyl-L-methionine = Co-precorrin-6A + S-adenosyl-L-homocysteine. It functions in the pathway cofactor biosynthesis; adenosylcobalamin biosynthesis; cob(II)yrinate a,c-diamide from sirohydrochlorin (anaerobic route): step 6/10. Functionally, catalyzes the methylation of C-1 in cobalt-precorrin-5B to form cobalt-precorrin-6A. The chain is Cobalt-precorrin-5B C(1)-methyltransferase from Listeria monocytogenes serotype 4a (strain HCC23).